The chain runs to 430 residues: Proteinase-activated receptor 1 (430 aa).

The N-terminal stretch at 1-21 (MGPRRLLIVALGLSLCGPLLS) is a signal peptide. Positions 22–41 (SRVPMSQPESERTDATVNPR) are cleaved as a propeptide — removed for receptor activation. Residues 42 to 107 (SFFLRNPSEN…SGYLTSPWLT (66 aa)) are Extracellular-facing. N-linked (GlcNAc...) asparagine glycans are attached at residues Asn67 and Asn80. Residues 108–133 (LFMPSVYTIVFIVSLPLNVLAIAVFV) traverse the membrane as a helical segment. The Cytoplasmic portion of the chain corresponds to 134-142 (LRMKVKKPA). Residues 143 to 162 (VVYMLHLAMADVLFVSVLPF) form a helical membrane-spanning segment. Topologically, residues 163-181 (KISYYFSGTDWQFGSGMCR) are extracellular. Cys180 and Cys259 are oxidised to a cystine. The chain crosses the membrane as a helical span at residues 182 to 203 (FATAAFYGNMYASIMLMTVISI). Over 204-223 (DRFLAVVYPIQSLSWRTLGR) the chain is Cytoplasmic. Residues 224–244 (ANFTCVVIWVMAIMGVVPLLL) traverse the membrane as a helical segment. Residues 245 to 273 (KEQTTRVPGLNITTCHDVLSENLMQGFYS) are Extracellular-facing. N-linked (GlcNAc...) asparagine glycosylation is present at Asn255. The chain crosses the membrane as a helical span at residues 274 to 293 (YYFSAFSAIFFLVPLIVSTV). At 294 to 316 (CYTSIIRCLSSSAVANRSKKSRA) the chain is on the cytoplasmic side. A helical transmembrane segment spans residues 317 to 339 (LFLSAAVFCIFIVCFGPTNVLLI). The Extracellular segment spans residues 340 to 354 (VHYLFLSDSPGTEAA). A helical membrane pass occupies residues 355–379 (YFAYLLCVCVSSVSCCIDPLIYYYA). The Cytoplasmic segment spans residues 380 to 430 (SSECQRHLYSILCCKESSDPNSCNSTGQLMPSKMDTCSSHLNNSIYKKLLA). Ser423 bears the Phosphoserine mark.

Belongs to the G-protein coupled receptor 1 family. In terms of processing, proteolytic cleavage by thrombin generates a new N-terminus that functions as a tethered ligand. Also proteolytically cleaved by cathepsin CTSG. Phosphorylated in the C-terminal tail; probably mediating desensitization prior to the uncoupling and internalization of the receptor.

The protein localises to the cell membrane. Its function is as follows. High affinity receptor that binds the activated thrombin, leading to calcium release from intracellular stores. The thrombin-activated receptor signaling pathway is mediated through PTX-insensitive G proteins, activation of phospholipase C resulting in the production of 1D-myo-inositol 1,4,5-trisphosphate (InsP3) which binds to InsP3 receptors causing calcium release from the stores. In astrocytes, the calcium released into the cytosol allows the Ca(2+)-dependent release of L-glutamate into the synaptic cleft through BEST1, that targets the neuronal postsynaptic GRIN2A/NMDAR receptor resulting in the synaptic plasticity regulation. May play a role in platelets activation and in vascular development. Mediates up-regulation of pro-inflammatory cytokines, such as MCP-1/CCL2 and IL6, triggered by coagulation factor Xa (F10) in cardiac fibroblasts and umbilical vein endothelial cells. The sequence is that of Proteinase-activated receptor 1 from Mus musculus (Mouse).